Reading from the N-terminus, the 563-residue chain is Putative GMC-type oxidoreductase L128 (563 aa).

The N-terminal stretch at 1 to 21 is a signal peptide; sequence MTSSIVLKFFLIATLLVIANS. 48–77 contributes to the FAD binding site; that stretch reads DYVIVGGGAAGSVLLDKCISYGYKCTLIER. Residue His-504 is the Proton acceptor of the active site.

Belongs to the GMC oxidoreductase family. FAD serves as cofactor.

The polypeptide is Putative GMC-type oxidoreductase L128 (Acanthamoeba polyphaga mimivirus (APMV)).